Consider the following 416-residue polypeptide: Serine/threonine transporter SstT (416 aa).

Helical transmembrane passes span 15-35 (SLVS…MFMP), 49-69 (VGAL…AAII), 82-102 (ILLL…VASF), 141-161 (ALMD…GIAM), 192-212 (LGIL…ALFG), 217-237 (LVVL…IIVF), 288-308 (VSIP…ITVL), 330-350 (VVAT…LLLI), and 356-376 (LFGI…IIGV).

The protein belongs to the dicarboxylate/amino acid:cation symporter (DAACS) (TC 2.A.23) family.

It is found in the cell inner membrane. The catalysed reaction is L-serine(in) + Na(+)(in) = L-serine(out) + Na(+)(out). It carries out the reaction L-threonine(in) + Na(+)(in) = L-threonine(out) + Na(+)(out). Functionally, involved in the import of serine and threonine into the cell, with the concomitant import of sodium (symport system). The chain is Serine/threonine transporter SstT from Aeromonas salmonicida (strain A449).